The primary structure comprises 473 residues: MKILYSQRRFYPVETLFNGTLALGGRDQETTGFAWWAGNARLINLSGKLLGAHVAHAGLIVFWAGAMNLFEVAHFVPEKPMYEQGLILLPHLATLGWGVGPGGEIVDTFPYFVSGVLHLISSAVLGFGGIYHALIGPETLEESFPFFGYVWKDKNKMTTILGIHLILLGAGAFLLVFKALYFGGIYDTWAPGGGDVRKITNLTLSPGVIFGYLLKSPFGGEGWIVSVDNLEDIIGGHVWLGSICIFGGIWHILTKPFAWARRALVWSGEAYLSYSLGAIAVFGFIACCFVWFNNTAYPSEFYGPTGPEASQAQAFTFLVRDQRLGANVGSAQGPTGLGKYIMRSPTGEIIFGGETMRFWDLRAPWLEPLRGPNGLDLSKLKKDIQPWQERRSAEYMTHAPLGSLNSVGGVATEINAVNYVSPRSWLATSHFVLGFFFFVGHLWHAGRARAAAAGFEKGIDRDFEPVLSMTPLN.

Positions 1–14 are excised as a propeptide; that stretch reads MKILYSQRRFYPVE. Thr-15 is subject to N-acetylthreonine. Position 15 is a phosphothreonine (Thr-15). 5 consecutive transmembrane segments (helical) span residues 69–93, 134–155, 178–200, 255–275, and 291–312; these read LFEVAHFVPEKPMYEQGLILLPHLA, LIGPETLEESFPFFGYVWKDKN, KALYFGGIYDTWAPGGGDVRKIT, KPFAWARRALVWSGEAYLSYS, and WFNNTAYPSEFYGPTGPEASQA. Glu-367 lines the [CaMn4O5] cluster pocket. A helical membrane pass occupies residues 447-471; that stretch reads RARAAAAGFEKGIDRDFEPVLSMTP.

This sequence belongs to the PsbB/PsbC family. PsbC subfamily. As to quaternary structure, PSII is composed of 1 copy each of membrane proteins PsbA, PsbB, PsbC, PsbD, PsbE, PsbF, PsbH, PsbI, PsbJ, PsbK, PsbL, PsbM, PsbT, PsbX, PsbY, PsbZ, Psb30/Ycf12, at least 3 peripheral proteins of the oxygen-evolving complex and a large number of cofactors. It forms dimeric complexes. Binds multiple chlorophylls and provides some of the ligands for the Ca-4Mn-5O cluster of the oxygen-evolving complex. It may also provide a ligand for a Cl- that is required for oxygen evolution. PSII binds additional chlorophylls, carotenoids and specific lipids. is required as a cofactor. Post-translationally, phosphorylated on threonine residue(s).

The protein resides in the plastid. It localises to the chloroplast thylakoid membrane. Functionally, one of the components of the core complex of photosystem II (PSII). It binds chlorophyll and helps catalyze the primary light-induced photochemical processes of PSII. PSII is a light-driven water:plastoquinone oxidoreductase, using light energy to abstract electrons from H(2)O, generating O(2) and a proton gradient subsequently used for ATP formation. In Marchantia polymorpha (Common liverwort), this protein is Photosystem II CP43 reaction center protein.